The sequence spans 133 residues: Large ribosomal subunit protein uL15 (133 aa).

The disordered stretch occupies residues 1–60; the sequence is MALENLKPAQGSTKDRKRVGRGQGSGMGKTSTRGGKGQTARTGYKAKRGFEGGQQPLQRR.

The protein belongs to the universal ribosomal protein uL15 family. In terms of assembly, part of the 50S ribosomal subunit.

Functionally, binds to the 23S rRNA. The chain is Large ribosomal subunit protein uL15 from Wolinella succinogenes (strain ATCC 29543 / DSM 1740 / CCUG 13145 / JCM 31913 / LMG 7466 / NCTC 11488 / FDC 602W) (Vibrio succinogenes).